We begin with the raw amino-acid sequence, 1776 residues long: MTTYRPLPNDGVDLAASCGARSTDILPGPHPGDYTPMGFWAQNGSMPQPLGESPAATTTRPSPTTPAMPKMGVRARVADWPPKRDALREQSNPSPSQDTDGVKTTKVAHSMRNLQNGQLPSSTPASSGSRAFHRLSRRRSKDVEFQDGWPRSPGRAFLPLRHRSSSEITLSECDVEEPGDPRGTRHPGVLPLFREYGSTSSIDVQGVPEQSFFDILNEFRSEQPEARGSQNLRELLQVDPGALSGGSCGTKGDPRNGQPTKDSLQSLQPLKEKEKSRKKPVRGLGSGDTVDSSIFRKLRSSKPEGEVGRPLGETEESRSPPEASRPWVCQKSFAHFDVQSMLFDLNEAAANRVSVAQRRNTTTGASAASAASAMVTLTASRAHSLGTLDPAFTSTEDLNCKENLEQDLGDDNSNDLLLSCPHFRNEIGGERERNVSFSRASVGSPGGSSEAHMAEPTLSTHRTNASISVLEVPKEQQRTQSRPRQYSIEHVDLGARYYQDYFVGKEHANYFGVDEKLGPVAVSIKREKLEDHKDHGPQYQYRIIFRTRELITLRGSILEDATPTATKHGTGRGLPLKDALEYVIPELNIHCLRLALNTPKVTEQLLKLDEQGLCRKHKVGILYCKAGQSSEEEMYNNEEAGPAFEEFLDLLGDKVCLKGFTKYAAQLDVKTDSTGTHSLYTTYQDYEIMFHVSTLLPYTPNNRQQLLRKRHIGNDIVTIIFQEPGALPFTPKNIRSHFQHVFIIVRVHNPCTENVCYSMAVTRSKDAPPFGPPIPNGTTFRKSDVFRDFLLAKVINAENAAHKSDKFHTMATRTRQEYLKDLAENCVSNTPIDSSGKFNLISLTSKKKEKTKARAGAEQHSAGAIAWRVAAQDYAQGSEIDCILGISNEFVVLLDLRTKEVVFNCYCGDVIGWTPDSSTIKIFYGRGDHIFLQAAEGSVEDIRDIVQRLKVMTNGWETVDMTLRRNGLGQLGFHVKYDGTVAEVEDYGFAWQAGLRQGSRLVEICKVAVVTLSHDQMIDLLRTSVTVKVVIIPPFEDGTPRRGWPETYDMNASEPKTESETTTPGGRPPYRSNAPWQWSGPASHNSLPATKWTTPATPGHAQSLSRLPKQTPVVPFRESQPLHSKRPVSFPETPFAASPAGADRVPPYRQPSGSFSTPGSATYARYKPSPERYAAAPHPLLSFDPHFMHDGMSSGDSSSGGLTSQESTMERPKPEPLWHVPAQARLSAMTGSIGSKHPSRQDAAGKDSPNRHSKGEPQYSSHSSSNTLSSNASSSHSDDRWFDPLDPLEPEQDPFSKGGSSDSGIDTTLYTSSPSCMSLAKAPRPTKPHKPPGNIGLCGGGRESAGRPHPVDRRREVSPAPVVAGQNKGYRPKLYSSGSCTPPGLVGGSRDPPRQPSDMGSRAGYPTQVYKTASAETPRPSQLSQCSPFQLSTSVPKSFFSKQPAHNKHSTGWKRTDEPPPRPLPFTDSKKQVDTNAKNVFGQPRLRASLRDLRSPRKNYKSTIEDDLKKLIVMDNLGPEQERDTGQSPQKSLQRTLSDESLCSGRREPSFASPASLEPGLPSDVLFTSTCTFPSSTLPARRQHQHAHPPSGAPSTTPATGNGFPEKKSAISASELSLADGRDRPLRRLDPGMMPLPDTAAGLEWSSLVNAAKAYEVQRAVSLFSLNDPALSPEIPPAHSPVHSHLSLERGPQTPRATPTMSEESPLDLTGKVYQLEVMLKQLHTDLQKEKQDKVVLQSEVASLRQNNQRLQEESQAASEQLRKFAELFSREKKEL.

Disordered stretches follow at residues 41 to 157 (AQNG…GRAF) and 240 to 325 (PGAL…EASR). Residues 54 to 69 (PAATTTRPSPTTPAMP) are compositionally biased toward low complexity. 2 stretches are compositionally biased toward polar residues: residues 89–99 (EQSNPSPSQDT) and 112–129 (RNLQ…SSGS). The residue at position 94 (serine 94) is a Phosphoserine. Residues 131–140 (AFHRLSRRRS) show a composition bias toward basic residues. Serine 140 is subject to Phosphoserine. Positions 257–268 (GQPTKDSLQSLQ) are enriched in polar residues. Serine 394 is subject to Phosphoserine. Residues 438 to 461 (SRASVGSPGGSSEAHMAEPTLSTH) are disordered. The Rap-GAP domain occupies 605–822 (LLKLDEQGLC…RTRQEYLKDL (218 aa)). Positions 960–1024 (DMTLRRNGLG…DQMIDLLRTS (65 aa)) constitute a PDZ domain. Disordered regions lie at residues 1040–1104 (PRRG…AQSL), 1117–1164 (RESQ…ATYA), and 1184–1632 (DPHF…LDPG). Polar residues-rich tracts occupy residues 1074–1104 (APWQ…AQSL) and 1151–1160 (PSGSFSTPGS). Residues 1190–1201 (DGMSSGDSSSGG) are compositionally biased toward low complexity. Residues 1239 to 1255 (SRQDAAGKDSPNRHSKG) are compositionally biased toward basic and acidic residues. Over residues 1260 to 1275 (SSHSSSNTLSSNASSS) the composition is skewed to low complexity. Positions 1298-1316 (GGSSDSGIDTTLYTSSPSC) are enriched in polar residues. Residues 1344–1357 (SAGRPHPVDRRREV) show a composition bias toward basic and acidic residues. A Phosphoserine modification is found at serine 1358. Position 1381 is a phosphothreonine (threonine 1381). Residues 1409-1436 (VYKTASAETPRPSQLSQCSPFQLSTSVP) show a composition bias toward polar residues. Lysine 1442 carries the N6-acetyllysine modification. Residues 1503 to 1512 (TIEDDLKKLI) are compositionally biased toward basic and acidic residues. 2 stretches are compositionally biased toward polar residues: residues 1526–1541 (GQSP…SDES) and 1566–1578 (LFTS…SSTL). Phosphoserine is present on residues serine 1538 and serine 1541. Residues 1589 to 1601 (PPSGAPSTTPATG) show a composition bias toward low complexity. 2 positions are modified to phosphoserine: serine 1614 and serine 1617. Residues 1620 to 1630 (DGRDRPLRRLD) are compositionally biased toward basic and acidic residues. The residue at position 1672 (serine 1672) is a Phosphoserine. A disordered region spans residues 1678–1705 (AHSPVHSHLSLERGPQTPRATPTMSEES). 2 positions are modified to phosphothreonine: threonine 1694 and threonine 1698. Positions 1715-1769 (QLEVMLKQLHTDLQKEKQDKVVLQSEVASLRQNNQRLQEESQAASEQLRKFAELF) form a coiled coil.

The protein localises to the apical cell membrane. Functionally, plays a critical role in epithelial cell morphogenesis, polarity, adhesion and cytoskeletal organization in the lens. This Mus musculus (Mouse) protein is Signal-induced proliferation-associated 1-like protein 3 (Sipa1l3).